The primary structure comprises 456 residues: Glutamyl-tRNA(Gln) amidotransferase subunit A (456 aa).

Residues Lys-74 and Ser-149 each act as charge relay system in the active site. Ser-173 acts as the Acyl-ester intermediate in catalysis.

Belongs to the amidase family. GatA subfamily. In terms of assembly, heterotrimer of A, B and C subunits.

The catalysed reaction is L-glutamyl-tRNA(Gln) + L-glutamine + ATP + H2O = L-glutaminyl-tRNA(Gln) + L-glutamate + ADP + phosphate + H(+). In terms of biological role, allows the formation of correctly charged Gln-tRNA(Gln) through the transamidation of misacylated Glu-tRNA(Gln) in organisms which lack glutaminyl-tRNA synthetase. The reaction takes place in the presence of glutamine and ATP through an activated gamma-phospho-Glu-tRNA(Gln). This chain is Glutamyl-tRNA(Gln) amidotransferase subunit A, found in Methanobrevibacter smithii (strain ATCC 35061 / DSM 861 / OCM 144 / PS).